A 290-amino-acid polypeptide reads, in one-letter code: Agroclavine dehydrogenase (290 aa).

The protein belongs to the fgaFS/easG family. As to quaternary structure, monomer.

The catalysed reaction is agroclavine + NADP(+) = didehydroagroclavine + NADPH + H(+). It participates in alkaloid biosynthesis; ergot alkaloid biosynthesis. Its function is as follows. Agroclavine dehydrogenase; part of the gene cluster that mediates the biosynthesis of fungal ergot alkaloid. DmaW catalyzes the first step of ergot alkaloid biosynthesis by condensing dimethylallyl diphosphate (DMAP) and tryptophan to form 4-dimethylallyl-L-tryptophan. The second step is catalyzed by the methyltransferase easF that methylates 4-dimethylallyl-L-tryptophan in the presence of S-adenosyl-L-methionine, resulting in the formation of 4-dimethylallyl-L-abrine. The catalase easC and the FAD-dependent oxidoreductase easE then transform 4-dimethylallyl-L-abrine to chanoclavine-I which is further oxidized by easD in the presence of NAD(+), resulting in the formation of chanoclavine-I aldehyde. Agroclavine dehydrogenase easG then mediates the conversion of chanoclavine-I aldehyde to agroclavine via a non-enzymatic adduct reaction: the substrate is an iminium intermediate that is formed spontaneously from chanoclavine-I aldehyde in the presence of glutathione. The presence of easA is not required to complete this reaction. Further conversion of agroclavine to paspalic acid is a two-step process involving oxidation of agroclavine to elymoclavine and of elymoclavine to paspalic acid, the second step being performed by the elymoclavine oxidase cloA. Paspalic acid is then further converted to D-lysergic acid. Ergopeptines are assembled from D-lysergic acid and three different amino acids by the D-lysergyl-peptide-synthetases composed each of a monomudular and a trimodular nonribosomal peptide synthetase subunit. LpsB and lpsC encode the monomodular subunits responsible for D-lysergic acid activation and incorporation into the ergopeptine backbone. LpsA1 and A2 subunits encode the trimodular nonribosomal peptide synthetase assembling the tripeptide portion of ergopeptines. LpsA1 is responsible for formation of the major ergopeptine, ergotamine, and lpsA2 for alpha-ergocryptine, the minor ergopeptine of the total alkaloid mixture elaborated by C.purpurea. D-lysergyl-tripeptides are assembled by the nonribosomal peptide synthetases and released as N-(D-lysergyl-aminoacyl)-lactams. Cyclolization of the D-lysergyl-tripeptides is performed by the Fe(2+)/2-ketoglutarate-dependent dioxygenase easH which introduces a hydroxyl group into N-(D-lysergyl-aminoacyl)-lactam at alpha-C of the aminoacyl residue followed by spontaneous condensation with the terminal lactam carbonyl group. This Claviceps purpurea (strain 20.1) (Ergot fungus) protein is Agroclavine dehydrogenase.